The primary structure comprises 178 residues: 2-C-methyl-D-erythritol 2,4-cyclodiphosphate synthase (178 aa).

The a divalent metal cation site is built by Asp24, His26, and His61. 24-26 serves as a coordination point for 4-CDP-2-C-methyl-D-erythritol 2-phosphate; sequence DSH. A 4-CDP-2-C-methyl-D-erythritol 2-phosphate-binding site is contributed by 150-153; sequence TSGE.

It belongs to the IspF family. As to quaternary structure, homotrimer. It depends on a divalent metal cation as a cofactor.

The enzyme catalyses 4-CDP-2-C-methyl-D-erythritol 2-phosphate = 2-C-methyl-D-erythritol 2,4-cyclic diphosphate + CMP. It functions in the pathway isoprenoid biosynthesis; isopentenyl diphosphate biosynthesis via DXP pathway; isopentenyl diphosphate from 1-deoxy-D-xylulose 5-phosphate: step 4/6. Functionally, involved in the biosynthesis of isopentenyl diphosphate (IPP) and dimethylallyl diphosphate (DMAPP), two major building blocks of isoprenoid compounds. Catalyzes the conversion of 4-diphosphocytidyl-2-C-methyl-D-erythritol 2-phosphate (CDP-ME2P) to 2-C-methyl-D-erythritol 2,4-cyclodiphosphate (ME-CPP) with a corresponding release of cytidine 5-monophosphate (CMP). The sequence is that of 2-C-methyl-D-erythritol 2,4-cyclodiphosphate synthase from Chlamydia trachomatis serovar L2 (strain ATCC VR-902B / DSM 19102 / 434/Bu).